Consider the following 155-residue polypeptide: 1,4-dihydroxy-2-naphthoyl-CoA hydrolase (155 aa).

Aspartate 22 is an active-site residue.

It belongs to the 4-hydroxybenzoyl-CoA thioesterase family. DHNA-CoA hydrolase subfamily.

The enzyme catalyses 1,4-dihydroxy-2-naphthoyl-CoA + H2O = 1,4-dihydroxy-2-naphthoate + CoA + H(+). It functions in the pathway cofactor biosynthesis; phylloquinone biosynthesis. The protein operates within quinol/quinone metabolism; 1,4-dihydroxy-2-naphthoate biosynthesis; 1,4-dihydroxy-2-naphthoate from chorismate: step 7/7. Functionally, catalyzes the hydrolysis of 1,4-dihydroxy-2-naphthoyl-CoA (DHNA-CoA) to 1,4-dihydroxy-2-naphthoate (DHNA), a reaction involved in phylloquinone (vitamin K1) biosynthesis. The polypeptide is 1,4-dihydroxy-2-naphthoyl-CoA hydrolase (Prochlorococcus marinus (strain SARG / CCMP1375 / SS120)).